A 351-amino-acid polypeptide reads, in one-letter code: Fructose-1,6-bisphosphatase class 1 1 (351 aa).

Mg(2+)-binding residues include E84, D106, L108, and D109. Residues 109–112 (DGSS) and N205 contribute to the substrate site. E277 is a Mg(2+) binding site.

It belongs to the FBPase class 1 family. As to quaternary structure, homotetramer. Requires Mg(2+) as cofactor.

Its subcellular location is the cytoplasm. The enzyme catalyses beta-D-fructose 1,6-bisphosphate + H2O = beta-D-fructose 6-phosphate + phosphate. It participates in carbohydrate biosynthesis; Calvin cycle. The protein is Fructose-1,6-bisphosphatase class 1 1 of Methylibium petroleiphilum (strain ATCC BAA-1232 / LMG 22953 / PM1).